We begin with the raw amino-acid sequence, 293 residues long: Probable porphobilinogen deaminase (293 aa).

At Cys233 the chain carries S-(dipyrrolylmethanemethyl)cysteine.

The protein belongs to the HMBS family. It depends on dipyrromethane as a cofactor.

The catalysed reaction is 4 porphobilinogen + H2O = hydroxymethylbilane + 4 NH4(+). The protein operates within porphyrin-containing compound metabolism; protoporphyrin-IX biosynthesis; coproporphyrinogen-III from 5-aminolevulinate: step 2/4. In terms of biological role, tetrapolymerization of the monopyrrole PBG into the hydroxymethylbilane pre-uroporphyrinogen in several discrete steps. This chain is Probable porphobilinogen deaminase, found in Saccharolobus islandicus (strain L.S.2.15 / Lassen #1) (Sulfolobus islandicus).